A 351-amino-acid chain; its full sequence is Regulator of V-ATPase in vacuolar membrane protein 2 (351 aa).

In terms of assembly, component of the RAVE complex composed of RAV1, RAV2 and CBF3D/SKP1. Within the complex, it interacts directly with RAV1 and CBF3D. Interacts with the V-ATPase V1 subunits VMA1, VMA2 and VMA8.

It localises to the cytoplasm. It is found in the early endosome membrane. Component of the RAVE complex, which is required for stable assembly of the vacuolar ATPase complex V-ATPase under many conditions. May be required for transport between the early endosome and the late endosome/prevacuolar compartment (PVC). This chain is Regulator of V-ATPase in vacuolar membrane protein 2 (RAV2), found in Saccharomyces cerevisiae (strain ATCC 204508 / S288c) (Baker's yeast).